Here is a 203-residue protein sequence, read N- to C-terminus: Nucleoside triphosphate pyrophosphatase (203 aa).

Asp-78 serves as the catalytic Proton acceptor.

Belongs to the Maf family. A divalent metal cation is required as a cofactor.

It localises to the cytoplasm. It catalyses the reaction a ribonucleoside 5'-triphosphate + H2O = a ribonucleoside 5'-phosphate + diphosphate + H(+). It carries out the reaction a 2'-deoxyribonucleoside 5'-triphosphate + H2O = a 2'-deoxyribonucleoside 5'-phosphate + diphosphate + H(+). Nucleoside triphosphate pyrophosphatase. May have a dual role in cell division arrest and in preventing the incorporation of modified nucleotides into cellular nucleic acids. The protein is Nucleoside triphosphate pyrophosphatase of Prochlorococcus marinus (strain AS9601).